Reading from the N-terminus, the 361-residue chain is sn-glycerol-3-phosphate import ATP-binding protein UgpC (361 aa).

The ABC transporter domain occupies 4-235 (VTLRNVRKTY…PATTFVASFI (232 aa)). Residue 37–44 (GPSGCGKS) coordinates ATP.

It belongs to the ABC transporter superfamily. sn-glycerol-3-phosphate importer (TC 3.A.1.1.3) family. As to quaternary structure, the complex is composed of two ATP-binding proteins (UgpC), two transmembrane proteins (UgpA and UgpE) and a solute-binding protein (UgpB).

Its subcellular location is the cell inner membrane. It catalyses the reaction sn-glycerol 3-phosphate(out) + ATP + H2O = sn-glycerol 3-phosphate(in) + ADP + phosphate + H(+). Part of the ABC transporter complex UgpBAEC involved in sn-glycerol-3-phosphate (G3P) import. Responsible for energy coupling to the transport system. This Rhodopseudomonas palustris (strain BisA53) protein is sn-glycerol-3-phosphate import ATP-binding protein UgpC.